We begin with the raw amino-acid sequence, 207 residues long: MKKTPRSTARELALLALSQLPKKSGSLEKKQLQEVVLAAVRTLRIEAQDILETAAAELQRGSDRLLNSQIDTTDIESARVMLYEAIELGQTAINRIGTAVELPEMLQLTNQLEVRSYAMEVLTKVNGNRKEVDKLLQESIVDWQIERLPRIDLDILRIAVAEMMFIGIQKQVAISEAVELAKRYSGEDGYKFINGVLRRVFDKINVI.

It belongs to the NusB family.

Its function is as follows. Involved in transcription antitermination. Required for transcription of ribosomal RNA (rRNA) genes. Binds specifically to the boxA antiterminator sequence of the ribosomal RNA (rrn) operons. In Trichodesmium erythraeum (strain IMS101), this protein is Transcription antitermination protein NusB.